A 414-amino-acid polypeptide reads, in one-letter code: Eukaryotic initiation factor 4A (414 aa).

Positions 41–69 (ESFDDMGLQENLLRGIYAYGFEKPSAIQQ) match the Q motif motif. One can recognise a Helicase ATP-binding domain in the interval 72–242 (IVPFCKGLDV…RKFMNKPVRI (171 aa)). 85–92 (AQSGTGKT) is a binding site for ATP. Positions 190–193 (DEAD) match the DEAD box motif. The Helicase C-terminal domain occupies 253-414 (GIKQFYVNVE…ELPANVADLL (162 aa)).

This sequence belongs to the DEAD box helicase family. eIF4A subfamily. As to quaternary structure, eIF4F is a multi-subunit complex, the composition of which varies with external and internal environmental conditions. It is composed of at least EIF4A, EIF4E and EIF4G.

The catalysed reaction is ATP + H2O = ADP + phosphate + H(+). Functionally, ATP-dependent RNA helicase which is a subunit of the eIF4F complex involved in cap recognition and is required for mRNA binding to ribosome. In the current model of translation initiation, eIF4A unwinds RNA secondary structures in the 5'-UTR of mRNAs which is necessary to allow efficient binding of the small ribosomal subunit, and subsequent scanning for the initiator codon. The protein is Eukaryotic initiation factor 4A of Triticum aestivum (Wheat).